The chain runs to 375 residues: DNA replication and repair protein RecF (375 aa).

Glycine 30 to threonine 37 contacts ATP.

This sequence belongs to the RecF family.

It is found in the cytoplasm. Functionally, the RecF protein is involved in DNA metabolism; it is required for DNA replication and normal SOS inducibility. RecF binds preferentially to single-stranded, linear DNA. It also seems to bind ATP. The sequence is that of DNA replication and repair protein RecF from Bacillus mycoides (strain KBAB4) (Bacillus weihenstephanensis).